The following is a 947-amino-acid chain: Mitogen-activated protein kinase kinase kinase 14 (947 aa).

2 disordered regions span residues 1–37 and 135–171; these read MAVM…KKQS and KGKR…TPEQ. Residues 135 to 151 are compositionally biased toward basic residues; sequence KGKRRSKARKKRKKKSS. Residues 400–655 enclose the Protein kinase domain; the sequence is ATHQLRLGRG…ELGGKVNRAL (256 aa). The interaction with ZFP91 stretch occupies residues 401-653; sequence THQLRLGRGS…AAELGGKVNR (253 aa). ATP contacts are provided by residues 406 to 414 and Lys429; that span reads LGRGSFGEV. Asp515 serves as the catalytic Proton acceptor. Thr559 is subject to Phosphothreonine. 2 disordered regions span residues 662-766 and 805-830; these read KSPW…ATVP and LSDD…GVHS. Basic and acidic residues predominate over residues 665 to 674; the sequence is WRGEYKEPRH. Pro residues predominate over residues 713–727; that stretch reads LQPPLPPEPPEPNKS. Over residues 741–752 the composition is skewed to low complexity; the sequence is EPLPLSSLEPAP. Positions 814 to 829 are enriched in polar residues; that stretch reads SKASQSSRDTLSSGVH.

The protein belongs to the protein kinase superfamily. STE Ser/Thr protein kinase family. MAP kinase kinase kinase subfamily. As to quaternary structure, interacts with TRAF2, TRAF5, TRAF6, IKKA and NFKB2/P100. Interacts with TRAF3 and PELI3. Interacts with NIBP; the interaction is direct. Interacts with ARRB1 and ARRB2. Interacts with GRB10. Interacts with ZFP91. Interacts with NLRP12; this interaction promotes proteasomal degradation of MAP3K14. Directly interacts with DDX3X. Interacts (via C-terminus and kinase domain) with PPPC3A (via N-terminus) and PPP3CB. Post-translationally, autophosphorylated. Phosphorylation at Thr-559 is required to activate its kinase activity and 'Lys-63'-linked polyubiquitination. Phosphorylated by CHUK/IKKA leading to MAP3K14 destabilization. In terms of processing, ubiquitinated. Undergoes both 'Lys-48'- and 'Lys-63'-linked polyubiquitination. 'Lys-48'-linked polyubiquitination leads to its degradation by the proteasome, while 'Lys-63'-linked polyubiquitination stabilizes and activates it. Weakly expressed in testis, small intestine, spleen, thymus, peripheral blood leukocytes, prostate, ovary and colon.

It is found in the cytoplasm. The catalysed reaction is L-seryl-[protein] + ATP = O-phospho-L-seryl-[protein] + ADP + H(+). It catalyses the reaction L-threonyl-[protein] + ATP = O-phospho-L-threonyl-[protein] + ADP + H(+). Lymphotoxin beta-activated kinase which seems to be exclusively involved in the activation of NF-kappa-B and its transcriptional activity. Phosphorylates CHUK/IKKA, thereby promoting proteolytic processing of NFKB2/P100, which leads to NF-kappa-B activation via the non-canonical pathway. Has an essential role in the non-canonical NF-kappa-B signaling that regulates genes encoding molecules involved in B-cell survival, lymphoid organogenesis, and immune response. Could act in a receptor-selective manner. This Homo sapiens (Human) protein is Mitogen-activated protein kinase kinase kinase 14.